Consider the following 175-residue polypeptide: Large ribosomal subunit protein uL6 (175 aa).

Belongs to the universal ribosomal protein uL6 family. In terms of assembly, part of the 50S ribosomal subunit.

Functionally, this protein binds to the 23S rRNA, and is important in its secondary structure. It is located near the subunit interface in the base of the L7/L12 stalk, and near the tRNA binding site of the peptidyltransferase center. This chain is Large ribosomal subunit protein uL6, found in Xylella fastidiosa (strain M23).